Reading from the N-terminus, the 297-residue chain is Phosphoribosylaminoimidazole-succinocarboxamide synthase (297 aa).

The protein belongs to the SAICAR synthetase family.

It catalyses the reaction 5-amino-1-(5-phospho-D-ribosyl)imidazole-4-carboxylate + L-aspartate + ATP = (2S)-2-[5-amino-1-(5-phospho-beta-D-ribosyl)imidazole-4-carboxamido]succinate + ADP + phosphate + 2 H(+). It participates in purine metabolism; IMP biosynthesis via de novo pathway; 5-amino-1-(5-phospho-D-ribosyl)imidazole-4-carboxamide from 5-amino-1-(5-phospho-D-ribosyl)imidazole-4-carboxylate: step 1/2. The protein is Phosphoribosylaminoimidazole-succinocarboxamide synthase of Mycobacterium sp. (strain JLS).